Reading from the N-terminus, the 201-residue chain is Holliday junction branch migration complex subunit RuvA (201 aa).

The tract at residues 1-64 is domain I; the sequence is MIGRLRGELV…EDAHVLYGFA (64 aa). The domain II stretch occupies residues 65-143; the sequence is SESERALFRS…SLPAAVTLTG (79 aa). Residues 144–153 form a flexible linker region; the sequence is GKPAAAAARA. The tract at residues 153 to 201 is domain III; sequence APDPVSDAVSALVSLGYKPQEASRLISAVEGEAERSEDLIRLALKATLK.

It belongs to the RuvA family. In terms of assembly, homotetramer. Forms an RuvA(8)-RuvB(12)-Holliday junction (HJ) complex. HJ DNA is sandwiched between 2 RuvA tetramers; dsDNA enters through RuvA and exits via RuvB. An RuvB hexamer assembles on each DNA strand where it exits the tetramer. Each RuvB hexamer is contacted by two RuvA subunits (via domain III) on 2 adjacent RuvB subunits; this complex drives branch migration. In the full resolvosome a probable DNA-RuvA(4)-RuvB(12)-RuvC(2) complex forms which resolves the HJ.

Its subcellular location is the cytoplasm. In terms of biological role, the RuvA-RuvB-RuvC complex processes Holliday junction (HJ) DNA during genetic recombination and DNA repair, while the RuvA-RuvB complex plays an important role in the rescue of blocked DNA replication forks via replication fork reversal (RFR). RuvA specifically binds to HJ cruciform DNA, conferring on it an open structure. The RuvB hexamer acts as an ATP-dependent pump, pulling dsDNA into and through the RuvAB complex. HJ branch migration allows RuvC to scan DNA until it finds its consensus sequence, where it cleaves and resolves the cruciform DNA. In Thioalkalivibrio sulfidiphilus (strain HL-EbGR7), this protein is Holliday junction branch migration complex subunit RuvA.